We begin with the raw amino-acid sequence, 716 residues long: ATP-dependent DNA helicase DinG (716 aa).

In terms of domain architecture, Helicase ATP-binding spans 17 to 294; it reads ALQEQIPDFI…TCMEQFRPKT (278 aa). 54–61 contacts ATP; the sequence is APTGVGKT. A [4Fe-4S] cluster-binding site is contributed by C120. A DEAH box motif is present at residues 131–134; it reads EPTQ. 3 residues coordinate [4Fe-4S] cluster: C194, C199, and C205. The DEAH box signature appears at 248–251; the sequence is DEGH. The Helicase C-terminal domain maps to 487–698; that stretch reads ALDSPFNHCE…VFPIEQPEVP (212 aa).

This sequence belongs to the helicase family. DinG subfamily. Type 1 sub-subfamily. Requires [4Fe-4S] cluster as cofactor.

It catalyses the reaction Couples ATP hydrolysis with the unwinding of duplex DNA at the replication fork by translocating in the 5'-3' direction. This creates two antiparallel DNA single strands (ssDNA). The leading ssDNA polymer is the template for DNA polymerase III holoenzyme which synthesizes a continuous strand.. The enzyme catalyses ATP + H2O = ADP + phosphate + H(+). In terms of biological role, DNA-dependent ATPase and 5'-3' DNA helicase. Unwinds D-loops, R-loops, forked DNA and G-quadruplex DNA. The chain is ATP-dependent DNA helicase DinG from Shigella flexneri.